The following is an 830-amino-acid chain: WD repeat-containing protein 75 (830 aa).

WD repeat units lie at residues 4-43 (EENI…KVYS), 47-86 (EECV…KLWD), 90-131 (GILI…QLVS), 145-184 (KELS…YFFK), 193-231 (LSSS…RLWR), 237-276 (KKYT…VEWR), 279-318 (TEKN…IIIH), 324-362 (SAVI…QFYS), and 376-423 (QQEY…KLWM). A Glycyl lysine isopeptide (Lys-Gly) (interchain with G-Cter in SUMO2) cross-link involves residue Lys123. Lys427 participates in a covalent cross-link: Glycyl lysine isopeptide (Lys-Gly) (interchain with G-Cter in SUMO2). 4 WD repeats span residues 430-474 (GFIL…KVWI), 487-525 (GWTC…TIWD), 529-569 (WELK…CCWN), and 574-611 (ALEW…FVFK). An N6-acetyllysine modification is found at Lys466. Phosphoserine occurs at positions 664 and 672. Residue Lys676 forms a Glycyl lysine isopeptide (Lys-Gly) (interchain with G-Cter in SUMO2) linkage. The tract at residues 763–806 (SAKEIPEDVDMEEEKESEDSDEENDFTEKVQDTSNTGLGEDIIH) is disordered. Over residues 769-787 (EDVDMEEEKESEDSDEEND) the composition is skewed to acidic residues. 4 positions are modified to phosphoserine: Ser779, Ser782, Ser796, and Ser811.

Component of the proposed t-UTP subcomplex of the ribosomal small subunit (SSU) processome. SSU processome is composed of more than 70 proteins and the RNA chaperone small nucleolar RNA (snoRNA) U3.

Its subcellular location is the nucleus. The protein resides in the nucleolus. In terms of biological role, ribosome biogenesis factor. Part of the small subunit (SSU) processome, first precursor of the small eukaryotic ribosomal subunit. During the assembly of the SSU processome in the nucleolus, many ribosome biogenesis factors, an RNA chaperone and ribosomal proteins associate with the nascent pre-rRNA and work in concert to generate RNA folding, modifications, rearrangements and cleavage as well as targeted degradation of pre-ribosomal RNA by the RNA exosome. Involved in nucleolar processing of pre-18S ribosomal RNA. Required for optimal pre-ribosomal RNA transcription by RNA polymerase I. This is WD repeat-containing protein 75 from Homo sapiens (Human).